We begin with the raw amino-acid sequence, 488 residues long: Glutamyl-tRNA(Gln) amidotransferase subunit A (488 aa).

Residues lysine 77 and serine 152 each act as charge relay system in the active site. The Acyl-ester intermediate role is filled by serine 176.

It belongs to the amidase family. GatA subfamily. In terms of assembly, heterotrimer of A, B and C subunits.

The catalysed reaction is L-glutamyl-tRNA(Gln) + L-glutamine + ATP + H2O = L-glutaminyl-tRNA(Gln) + L-glutamate + ADP + phosphate + H(+). Its function is as follows. Allows the formation of correctly charged Gln-tRNA(Gln) through the transamidation of misacylated Glu-tRNA(Gln) in organisms which lack glutaminyl-tRNA synthetase. The reaction takes place in the presence of glutamine and ATP through an activated gamma-phospho-Glu-tRNA(Gln). This chain is Glutamyl-tRNA(Gln) amidotransferase subunit A, found in Streptococcus pneumoniae (strain JJA).